The chain runs to 156 residues: ATP synthase subunit b (156 aa).

Residues Leu7 to Pro27 traverse the membrane as a helical segment.

This sequence belongs to the ATPase B chain family. F-type ATPases have 2 components, F(1) - the catalytic core - and F(0) - the membrane proton channel. F(1) has five subunits: alpha(3), beta(3), gamma(1), delta(1), epsilon(1). F(0) has three main subunits: a(1), b(2) and c(10-14). The alpha and beta chains form an alternating ring which encloses part of the gamma chain. F(1) is attached to F(0) by a central stalk formed by the gamma and epsilon chains, while a peripheral stalk is formed by the delta and b chains.

The protein resides in the cell inner membrane. F(1)F(0) ATP synthase produces ATP from ADP in the presence of a proton or sodium gradient. F-type ATPases consist of two structural domains, F(1) containing the extramembraneous catalytic core and F(0) containing the membrane proton channel, linked together by a central stalk and a peripheral stalk. During catalysis, ATP synthesis in the catalytic domain of F(1) is coupled via a rotary mechanism of the central stalk subunits to proton translocation. Functionally, component of the F(0) channel, it forms part of the peripheral stalk, linking F(1) to F(0). The chain is ATP synthase subunit b from Polaromonas naphthalenivorans (strain CJ2).